The chain runs to 215 residues: Pyrrolidone-carboxylate peptidase (215 aa).

Residues Glu-80, Cys-143, and His-167 contribute to the active site.

This sequence belongs to the peptidase C15 family. Homotetramer.

Its subcellular location is the cytoplasm. The catalysed reaction is Release of an N-terminal pyroglutamyl group from a polypeptide, the second amino acid generally not being Pro.. Its function is as follows. Removes 5-oxoproline from various penultimate amino acid residues except L-proline. This chain is Pyrrolidone-carboxylate peptidase, found in Bacillus cereus (strain AH820).